The following is a 438-amino-acid chain: MQVTVEKKEGIHCSLLIEVPANEIDSVVSKEINRTAKTIKMDGFRPGKVPAGMVKKKYGEQIRMEVISDLIPQKYSKAIQDEKLAVAGIEVELKENKEGQPLKFVANLELFPEFEVTGFEKIEVQKPVVELTDKEVKQMIENLRKQFATFSEVDKVVEKDDKVTIDFVGKKDGEAFEGGTANDIDVIIGSGQMIPGFEDGIIGMKKGEQKTITVTFPQDYQNKDLAEAETTFDITVKKIQQAELPEVNDEFVKKFGVKGGVDTFENEIKENMQRELKFILQRKVKDQVFKGLREIAEFETPKSLIKREIDAAKQNLLKQMGGAKGFDVNQLPDNLFEANAKQKVETSLILDSIMNLQEFKAEEAEVESLLDELVQAYEEPEKTKEQIKKNDKEIANLKALVIENKLTDWVLEQAKVTEKTEDFFEVIKENMQAQQAGF.

One can recognise a PPIase FKBP-type domain in the interval 160-245 (DDKVTIDFVG…VKKIQQAELP (86 aa)).

Belongs to the FKBP-type PPIase family. Tig subfamily.

It localises to the cytoplasm. It catalyses the reaction [protein]-peptidylproline (omega=180) = [protein]-peptidylproline (omega=0). Involved in protein export. Acts as a chaperone by maintaining the newly synthesized protein in an open conformation. Functions as a peptidyl-prolyl cis-trans isomerase. The polypeptide is Trigger factor (Francisella tularensis subsp. mediasiatica (strain FSC147)).